The chain runs to 379 residues: Sulfate adenylyltransferase (379 aa).

Belongs to the sulfate adenylyltransferase family.

It catalyses the reaction sulfate + ATP + H(+) = adenosine 5'-phosphosulfate + diphosphate. The protein operates within sulfur metabolism; hydrogen sulfide biosynthesis; sulfite from sulfate: step 1/3. The polypeptide is Sulfate adenylyltransferase (Cenarchaeum symbiosum (strain A)).